The primary structure comprises 176 residues: Telomerase RNA component interacting RNase (176 aa).

Residues 1-12 (MAARGRRAEPQG) are compositionally biased toward basic and acidic residues. Residues 1-121 (MAARGRRAEP…TLSFVGKRRG (121 aa)) form a disordered region. Residues 45-56 (SGAGSSPVSGGV) are compositionally biased toward low complexity. Residues 68–83 (LFKRKMEEEQRQRQEE) are compositionally biased toward basic and acidic residues. Residues 90 to 101 (RPDQSAAAAGPG) are compositionally biased toward low complexity. At Lys-146 the chain carries N6-acetyllysine.

As to quaternary structure, part of the telomerase RNA 3' end complex which contains about 488 proteins.

Zn(2+) inhibits the RNase activity while Mg(2+), Ca(2+), Mn(2+), K(+), Na(+), EDTA and EGTA show little effect on the exoribonuclease activity. Functionally, exoribonuclease that is part of the telomerase RNA 3' end processing complex and which has the ability to cleave all four unpaired RNA nucleotides from the 5' end or 3' end with higher efficiency for purine bases. This is Telomerase RNA component interacting RNase from Homo sapiens (Human).